A 483-amino-acid chain; its full sequence is Myocilin (483 aa).

Positions 1 to 18 are cleaved as a signal peptide; the sequence is MPTAQLLLLACLLWGLEA. Asparagine 43 carries an N-linked (GlcNAc...) asparagine glycan. The stretch at 51-162 forms a coiled coil; the sequence is GQAMSAIQDL…SQEVARLRRG (112 aa). Residues 153 to 179 are disordered; it reads SQEVARLRRGQCPQAHSSSQDVPAGSR. The region spanning 223-482 is the Olfactomedin-like domain; it reads GCGELVWVGE…MVTYDIRLSK (260 aa). Cysteines 224 and 412 form a disulfide. Ca(2+) is bound by residues aspartate 359, asparagine 407, alanine 408, isoleucine 456, and aspartate 457. Residues 481 to 483 carry the Microbody targeting signal motif; sequence SKM.

Homodimer (via N-terminus). Can also form higher oligomers. Interacts with OLFM3, FN1, NRCAM, GLDN and NFASC. Interacts (via N-terminus) with MYL2. Interacts with SFRP1, FRZB, FZD7, FZD10, FZD1 and WIF1; regulates Wnt signaling. Interacts with SNTA1; regulates muscle hypertrophy. Interacts with ERBB2 and ERBB3; activates ERBB2-ERBB3 signaling pathway. Interacts with SNCG; affects its secretion and its aggregation. Post-translationally, N-glycosylated. Palmitoylated. In terms of processing, undergoes a calcium-dependent proteolytic cleavage at Arg-205 by CAPN2 in the endoplasmic reticulum. The result is the production of two fragments, one of 35 kDa containing the C-terminal olfactomedin-like domain, and another of 20 kDa containing the N-terminal leucine zipper-like domain. As to expression, expressed in optic nerve head, ciliary body and retina.

The protein localises to the secreted. The protein resides in the golgi apparatus. It is found in the cytoplasmic vesicle. It localises to the extracellular space. Its subcellular location is the extracellular matrix. The protein localises to the extracellular exosome. The protein resides in the mitochondrion. It is found in the mitochondrion intermembrane space. It localises to the mitochondrion inner membrane. Its subcellular location is the mitochondrion outer membrane. The protein localises to the rough endoplasmic reticulum. The protein resides in the cell projection. It is found in the cilium. It localises to the endoplasmic reticulum. Secreted glycoprotein regulating the activation of different signaling pathways in adjacent cells to control different processes including cell adhesion, cell-matrix adhesion, cytoskeleton organization and cell migration. Promotes substrate adhesion, spreading and formation of focal contacts. Negatively regulates cell-matrix adhesion and stress fiber assembly through Rho protein signal transduction. Modulates the organization of actin cytoskeleton by stimulating the formation of stress fibers through interactions with components of Wnt signaling pathways. Promotes cell migration through activation of PTK2 and the downstream phosphatidylinositol 3-kinase signaling. Plays a role in bone formation and promotes osteoblast differentiation in a dose-dependent manner through mitogen-activated protein kinase signaling. Mediates myelination in the peripheral nervous system through ERBB2/ERBB3 signaling. Plays a role as a regulator of muscle hypertrophy through the components of dystrophin-associated protein complex. Involved in positive regulation of mitochondrial depolarization. Plays a role in neurite outgrowth. May participate in the obstruction of fluid outflow in the trabecular meshwork. The protein is Myocilin (MYOC) of Canis lupus familiaris (Dog).